The following is a 133-amino-acid chain: Fatty acid-binding protein homolog 2 (133 aa).

A fatty acid is bound by residues R107 and 127-129 (RTY).

Belongs to the calycin superfamily. Fatty-acid binding protein (FABP) family.

Functionally, may play a role in the acquisition, storage, and transport of lipids, and may be important to the organism since it is incapable of synthesizing most of its lipids de novo. This chain is Fatty acid-binding protein homolog 2 (FABP2), found in Echinococcus granulosus (Hydatid tapeworm).